Consider the following 349-residue polypeptide: Secondary metabolism regulator LAE1 (349 aa).

Residues 1-46 (MSSRNAPSGCVAPSPATAAPPSPTNLRLTVGQSGSESANEPGGEPE) form a disordered region. Over residues 25–38 (NLRLTVGQSGSESA) the composition is skewed to polar residues.

It belongs to the methyltransferase superfamily. LaeA methyltransferase family. Component of the heterotrimeric velvet complex composed of LAE1, VEL1 and VEL2; VEL1 acting as a bridging protein between LAE1 and VEL2.

It is found in the nucleus. The enzyme catalyses L-methionyl-[protein] + S-adenosyl-L-methionine = S-methyl-L-methionyl-[protein] + S-adenosyl-L-homocysteine. Its function is as follows. Methyltransferase that performs automethylation. No other methyl-accepting substrate has been identified yet. Component of the velvet transcription factor complex that acts as a global regulator for secondary metabolite gene expression. Controls the expression of the gamma-pentyl-pyrone gene clusters. Required for the expression of cellulase. Regulates asexual sporulation (conidiation) by environmental stimuli such as light and/or mechanical injury. Required for oxidative stress tolerance. Also plays a role in defense and parasitism on other fungi. The protein is Secondary metabolism regulator LAE1 of Hypocrea atroviridis (strain ATCC 20476 / IMI 206040) (Trichoderma atroviride).